Consider the following 965-residue polypeptide: Valine--tRNA ligase (965 aa).

Residues 1 to 12 show a composition bias toward polar residues; the sequence is MEKTPATQTQAE. The interval 1–23 is disordered; sequence MEKTPATQTQAEPSLDKTYNPKE. Residues 56 to 66 carry the 'HIGH' region motif; the sequence is PNVTGSLHMGH. Residues 568–572 carry the 'KMSKS' region motif; sequence KMSKS. K571 lines the ATP pocket. The stretch at 893 to 960 forms a coiled coil; that stretch reads MAGLVDKEAE…SKEKLLAQKE (68 aa).

It belongs to the class-I aminoacyl-tRNA synthetase family. ValS type 1 subfamily. In terms of assembly, monomer.

It localises to the cytoplasm. The enzyme catalyses tRNA(Val) + L-valine + ATP = L-valyl-tRNA(Val) + AMP + diphosphate. Its function is as follows. Catalyzes the attachment of valine to tRNA(Val). As ValRS can inadvertently accommodate and process structurally similar amino acids such as threonine, to avoid such errors, it has a 'posttransfer' editing activity that hydrolyzes mischarged Thr-tRNA(Val) in a tRNA-dependent manner. The sequence is that of Valine--tRNA ligase from Photorhabdus laumondii subsp. laumondii (strain DSM 15139 / CIP 105565 / TT01) (Photorhabdus luminescens subsp. laumondii).